Here is a 204-residue protein sequence, read N- to C-terminus: Large ribosomal subunit protein eL15 (204 aa).

This sequence belongs to the eukaryotic ribosomal protein eL15 family. Component of the large ribosomal subunit.

Its subcellular location is the cytoplasm. Its function is as follows. Component of the large ribosomal subunit. The ribosome is a large ribonucleoprotein complex responsible for the synthesis of proteins in the cell. The protein is Large ribosomal subunit protein eL15 (rpl15) of Siniperca knerii (Big-eye mandarin fish).